The sequence spans 319 residues: Forkhead box protein E3 (319 aa).

The interval 1–69 (MAGRSDMDPP…GRRRRRPLQR (69 aa)) is disordered. The span at 44–53 (AAAGRGEAAP) shows a compositional bias: low complexity. The fork-head DNA-binding region spans 71-165 (KPPYSYIALI…DNGSFLRRRK (95 aa)).

It is found in the nucleus. Transcription factor that controls lens epithelial cell growth through regulation of proliferation, apoptosis and cell cycle. During lens development, controls the ratio of the lens fiber cells to the cells of the anterior lens epithelium by regulating the rate of proliferation and differentiation. Controls lens vesicle closure and subsequent separation of the lens vesicle from ectoderm. Controls the expression of DNAJB1 in a pathway that is crucial for the development of the anterior segment of the eye. This Homo sapiens (Human) protein is Forkhead box protein E3 (FOXE3).